Reading from the N-terminus, the 83-residue chain is Sulfur carrier protein TusA (83 aa).

Cys-20 acts as the Cysteine persulfide intermediate in catalysis.

Belongs to the sulfur carrier protein TusA family.

Its subcellular location is the cytoplasm. In terms of biological role, sulfur carrier protein which probably makes part of a sulfur-relay system. The protein is Sulfur carrier protein TusA of Pseudomonas fluorescens (strain SBW25).